Here is a 263-residue protein sequence, read N- to C-terminus: Troponin T, slow skeletal muscle (263 aa).

Over residues 1–38 the composition is skewed to acidic residues; it reads MSDAEEQEYEEEQPEEEEAAEEEEEAPEEPEPAAEPEE. Disordered stretches follow at residues 1–64 and 109–154; these read MSDA…RVDF and AERA…KKKV. S2 carries the post-translational modification Phosphoserine; by CK2. Positions 44 to 56 are enriched in pro residues; it reads SRPVVPPLIPPKI. Over residues 109 to 150 the composition is skewed to basic and acidic residues; the sequence is AERAEQQRFRTEKERERQAKLAEEKMRKEEEEAKKRAEDDAK.

It belongs to the troponin T family. In terms of assembly, interacts with TPM3. As to expression, expressed dominantly in slow muscles, like masseter, diaphragm, psoas major and spinnalis. Isoform 2 is also expressed in fast muscles.

Its function is as follows. Troponin T is the tropomyosin-binding subunit of troponin, the thin filament regulatory complex which confers calcium-sensitivity to striated muscle actomyosin ATPase activity. In Bos taurus (Bovine), this protein is Troponin T, slow skeletal muscle (TNNT1).